A 322-amino-acid chain; its full sequence is Ribosomal RNA small subunit methyltransferase H (322 aa).

S-adenosyl-L-methionine-binding positions include Gly47–His49, Asp67, Phe93, Asp112, and Gln119.

It belongs to the methyltransferase superfamily. RsmH family.

The protein localises to the cytoplasm. It catalyses the reaction cytidine(1402) in 16S rRNA + S-adenosyl-L-methionine = N(4)-methylcytidine(1402) in 16S rRNA + S-adenosyl-L-homocysteine + H(+). Specifically methylates the N4 position of cytidine in position 1402 (C1402) of 16S rRNA. This is Ribosomal RNA small subunit methyltransferase H from Stenotrophomonas maltophilia (strain K279a).